The chain runs to 380 residues: mRNA cap guanine-N(7) methyltransferase (380 aa).

In terms of domain architecture, mRNA cap 0 methyltransferase spans 24–333; sequence SRIFFMRNMN…MYLVFGFRKK (310 aa). 33–34 lines the mRNA pocket; that stretch reads NN. 6 residues coordinate S-adenosyl-L-methionine: K37, A62, D84, D117, Q139, and Y144. The segment at 336–380 is disordered; sequence EAEKTEEEPATTKPVAESESEQKEVTESEEKEDQEDCEHQEAQTN.

The protein belongs to the class I-like SAM-binding methyltransferase superfamily. mRNA cap 0 methyltransferase family.

The protein resides in the nucleus. It catalyses the reaction a 5'-end (5'-triphosphoguanosine)-ribonucleoside in mRNA + S-adenosyl-L-methionine = a 5'-end (N(7)-methyl 5'-triphosphoguanosine)-ribonucleoside in mRNA + S-adenosyl-L-homocysteine. MRNA-capping methyltransferase that methylates the N7 position of the added guanosine to the 5'-cap structure of mRNAs. Binds RNA containing 5'-terminal GpppC. In Caenorhabditis elegans, this protein is mRNA cap guanine-N(7) methyltransferase (tag-72).